The primary structure comprises 248 residues: Anamorsin homolog (248 aa).

Positions 4–129 (FKGLQKSLYI…ETGSSARLSF (126 aa)) are N-terminal SAM-like domain. Residues 130–161 (AKKNANAVNVWKISGDDEELIDEEELLDEEDK) are linker. [2Fe-2S] cluster-binding residues include C172, C181, C184, and C186. The tract at residues 172–186 (CSTTGKRKACKNCSC) is fe-S binding site A. C209, C212, C220, and C223 together coordinate [4Fe-4S] cluster. 2 short sequence motifs (cx2C motif) span residues 209-212 (CGNC) and 220-223 (CSTC). Positions 209-223 (CGNCYLGDAFRCSTC) are fe-S binding site B.

It belongs to the anamorsin family. Monomer. It depends on [2Fe-2S] cluster as a cofactor. [4Fe-4S] cluster serves as cofactor.

The protein resides in the cytoplasm. It localises to the mitochondrion intermembrane space. Its function is as follows. Component of the cytosolic iron-sulfur (Fe-S) protein assembly (CIA) machinery. Required for the maturation of extramitochondrial Fe-S proteins. Part of an electron transfer chain functioning in an early step of cytosolic Fe-S biogenesis, facilitating the de novo assembly of a [4Fe-4S] cluster on the cytosolic Fe-S scaffold complex. Electrons are transferred from NADPH via a FAD- and FMN-containing diflavin oxidoreductase. Together with the diflavin oxidoreductase, also required for the assembly of the diferric tyrosyl radical cofactor of ribonucleotide reductase (RNR), probably by providing electrons for reduction during radical cofactor maturation in the catalytic small subunit. This chain is Anamorsin homolog, found in Drosophila simulans (Fruit fly).